A 151-amino-acid chain; its full sequence is Small ribosomal subunit protein uS11 (151 aa).

Positions 129 to 151 (IEDVTPVPSDSTRRKGGRRGRRL) are disordered. Residues 142-151 (RKGGRRGRRL) are compositionally biased toward basic residues.

Belongs to the universal ribosomal protein uS11 family.

This Procambarus clarkii (Red swamp crayfish) protein is Small ribosomal subunit protein uS11 (RPS14).